Consider the following 171-residue polypeptide: Disulfide bond formation protein B (171 aa).

Topologically, residues 1–10 (MQRLLTYRAL) are cytoplasmic. Residues 11–27 (NFILFIASVVAMLFAII) form a helical membrane-spanning segment. Topologically, residues 28-46 (FLQNYKGLEPCPLCIFQRI) are periplasmic. Residues Cys-38 and Cys-41 are joined by a disulfide bond. The chain crosses the membrane as a helical span at residues 47 to 63 (GLMVMGGFSLIAAVGHP). Over 64–70 (KKMGMQL) the chain is Cytoplasmic. A helical transmembrane segment spans residues 71 to 88 (LLWIGSMAGILWSAGVAA). At 89-145 (RHVWIQHLPADQVPACGPGLDYFLEALPMKQVINQVLSGSGECAEISWRFLGLSIPE) the chain is on the periplasmic side. An intrachain disulfide couples Cys-104 to Cys-131. Residues 146–164 (QALILFTALILVNLLVLWR) form a helical membrane-spanning segment. Over 165–171 (IISKRTA) the chain is Cytoplasmic.

The protein belongs to the DsbB family.

It localises to the cell inner membrane. Its function is as follows. Required for disulfide bond formation in some periplasmic proteins. Acts by oxidizing the DsbA protein. The sequence is that of Disulfide bond formation protein B from Psychrobacter sp. (strain PRwf-1).